Consider the following 271-residue polypeptide: Glutamate racemase (271 aa).

Substrate is bound by residues 12–13 (DS) and 44–45 (YG). Catalysis depends on Cys75, which acts as the Proton donor/acceptor. Position 76-77 (76-77 (NT)) interacts with substrate. The active-site Proton donor/acceptor is the Cys185. 186–187 (TH) lines the substrate pocket.

It belongs to the aspartate/glutamate racemases family.

It carries out the reaction L-glutamate = D-glutamate. It functions in the pathway cell wall biogenesis; peptidoglycan biosynthesis. Its function is as follows. Provides the (R)-glutamate required for cell wall biosynthesis. The sequence is that of Glutamate racemase from Mycobacterium marinum (strain ATCC BAA-535 / M).